We begin with the raw amino-acid sequence, 879 residues long: Alanine--tRNA ligase (879 aa).

Zn(2+)-binding residues include His564, His568, Cys666, and His670.

It belongs to the class-II aminoacyl-tRNA synthetase family. The cofactor is Zn(2+).

It localises to the cytoplasm. It carries out the reaction tRNA(Ala) + L-alanine + ATP = L-alanyl-tRNA(Ala) + AMP + diphosphate. In terms of biological role, catalyzes the attachment of alanine to tRNA(Ala) in a two-step reaction: alanine is first activated by ATP to form Ala-AMP and then transferred to the acceptor end of tRNA(Ala). Also edits incorrectly charged Ser-tRNA(Ala) and Gly-tRNA(Ala) via its editing domain. This Crocosphaera subtropica (strain ATCC 51142 / BH68) (Cyanothece sp. (strain ATCC 51142)) protein is Alanine--tRNA ligase.